Here is a 567-residue protein sequence, read N- to C-terminus: Urease subunit alpha (567 aa).

The Urease domain occupies 129–567; it reads GGIDTHIHFI…LPMAQRYFLF (439 aa). Positions 134, 136, and 217 each coordinate Ni(2+). K217 carries the post-translational modification N6-carboxylysine. A substrate-binding site is contributed by H219. Positions 246 and 272 each coordinate Ni(2+). The active-site Proton donor is H320. A Ni(2+)-binding site is contributed by D360.

This sequence belongs to the metallo-dependent hydrolases superfamily. Urease alpha subunit family. As to quaternary structure, heterotrimer of UreA (gamma), UreB (beta) and UreC (alpha) subunits. Three heterotrimers associate to form the active enzyme. Requires Ni cation as cofactor. In terms of processing, carboxylation allows a single lysine to coordinate two nickel ions.

The protein localises to the cytoplasm. The enzyme catalyses urea + 2 H2O + H(+) = hydrogencarbonate + 2 NH4(+). It participates in nitrogen metabolism; urea degradation; CO(2) and NH(3) from urea (urease route): step 1/1. In Delftia acidovorans (strain DSM 14801 / SPH-1), this protein is Urease subunit alpha.